The following is a 118-amino-acid chain: UPF0134 protein MPN_287 (118 aa).

This sequence belongs to the UPF0134 family.

The polypeptide is UPF0134 protein MPN_287 (Mycoplasma pneumoniae (strain ATCC 29342 / M129 / Subtype 1) (Mycoplasmoides pneumoniae)).